Consider the following 307-residue polypeptide: D-alanine--D-alanine ligase (307 aa).

Residues lysine 105 to glutamate 304 form the ATP-grasp domain. Valine 135–threonine 190 is an ATP binding site. Residues aspartate 258, glutamate 271, and asparagine 273 each coordinate Mg(2+).

Belongs to the D-alanine--D-alanine ligase family. Mg(2+) is required as a cofactor. The cofactor is Mn(2+).

It is found in the cytoplasm. The catalysed reaction is 2 D-alanine + ATP = D-alanyl-D-alanine + ADP + phosphate + H(+). It participates in cell wall biogenesis; peptidoglycan biosynthesis. Its function is as follows. Cell wall formation. The polypeptide is D-alanine--D-alanine ligase (Mannheimia succiniciproducens (strain KCTC 0769BP / MBEL55E)).